The chain runs to 194 residues: Glycerol-3-phosphate acyltransferase (194 aa).

The next 6 membrane-spanning stretches (helical) occupy residues 3-23, 52-72, 80-100, 112-132, 135-155, and 162-182; these read AGLF…GLLL, VGIL…LLAW, MQAW…FLLF, VFLA…ILLV, WRYI…IIFF, and LLIA…SNIS.

The protein belongs to the PlsY family. As to quaternary structure, probably interacts with PlsX.

The protein resides in the cell inner membrane. The catalysed reaction is an acyl phosphate + sn-glycerol 3-phosphate = a 1-acyl-sn-glycero-3-phosphate + phosphate. Its pathway is lipid metabolism; phospholipid metabolism. Its function is as follows. Catalyzes the transfer of an acyl group from acyl-phosphate (acyl-PO(4)) to glycerol-3-phosphate (G3P) to form lysophosphatidic acid (LPA). This enzyme utilizes acyl-phosphate as fatty acyl donor, but not acyl-CoA or acyl-ACP. In Trichlorobacter lovleyi (strain ATCC BAA-1151 / DSM 17278 / SZ) (Geobacter lovleyi), this protein is Glycerol-3-phosphate acyltransferase.